A 280-amino-acid chain; its full sequence is MVSRRKKRKAGGHEESIPSPPGYSAVPVKFSAKQQAPHYLYMRQHRVRQGTQSTWPPDRTLFILNVPPYCTQESLSRCLSCCGTIKTVELQEKPDLAESPTEPKSQFFHPKPVPGFQVAYVVFQKPSGVSAALNLKGPLLVSTESHLVKSGIHKWISDYEDSVLDPEALRMEVDAFMEAYDKKIAEEEAKAKEEEGVPDEEGWVKVTRRGRRPVLPRTEAASLRVLEKEKRKRARKELLNFYAWQHRETKMEHLAQLRKKFEEDKQRIELMRAQRKFRPY.

Residues 1-10 (MVSRRKKRKA) show a composition bias toward basic residues. Positions 1 to 24 (MVSRRKKRKAGGHEESIPSPPGYS) are disordered. The RRM domain maps to 59 to 159 (RTLFILNVPP…SGIHKWISDY (101 aa)). Serine 99 is subject to Phosphoserine.

This sequence belongs to the RRP7 family. Part of the small subunit (SSU) processome, composed of more than 70 proteins and the RNA chaperone small nucleolar RNA (snoRNA) U3. Interacts with NOL6; required for NOL6 localization to nucleolus.

It is found in the nucleus. The protein resides in the nucleolus. It localises to the cell projection. The protein localises to the cilium. Its subcellular location is the cytoplasm. It is found in the cytoskeleton. The protein resides in the microtubule organizing center. It localises to the centrosome. Nucleolar protein that is involved in ribosomal RNA (rRNA) processing. Also plays a role in primary cilia resorption, and cell cycle progression in neurogenesis and neocortex development. Part of the small subunit (SSU) processome, first precursor of the small eukaryotic ribosomal subunit. During the assembly of the SSU processome in the nucleolus, many ribosome biogenesis factors, an RNA chaperone and ribosomal proteins associate with the nascent pre-rRNA and work in concert to generate RNA folding, modifications, rearrangements and cleavage as well as targeted degradation of pre-ribosomal RNA by the RNA exosome. This Mus musculus (Mouse) protein is Ribosomal RNA-processing protein 7 homolog A (Rrp7a).